Consider the following 468-residue polypeptide: Dimethylamine methyltransferase MtbB1 (468 aa).

Pyl-356 is a non-standard amino acid (pyrrolysine).

Belongs to the dimethylamine methyltransferase family.

It catalyses the reaction Co(I)-[dimethylamine-specific corrinoid protein] + dimethylamine + H(+) = methyl-Co(III)-[dimethylamine-specific corrinoid protein] + methylamine. It functions in the pathway one-carbon metabolism; methanogenesis from dimethylamine. In terms of biological role, catalyzes the transfer of a methyl group from dimethylamine to the corrinoid cofactor of MtbC. In Methanosarcina mazei (strain ATCC BAA-159 / DSM 3647 / Goe1 / Go1 / JCM 11833 / OCM 88) (Methanosarcina frisia), this protein is Dimethylamine methyltransferase MtbB1 (mtbB1).